Consider the following 510-residue polypeptide: GMP synthase [glutamine-hydrolyzing] (510 aa).

Residues 5 to 195 (MIVVLDFGSQ…VFEVCGCRGD (191 aa)) form the Glutamine amidotransferase type-1 domain. Catalysis depends on Cys-82, which acts as the Nucleophile. Catalysis depends on residues His-169 and Glu-171. A GMPS ATP-PPase domain is found at 196–385 (WTMENFIDEQ…LGIPDEIVWR (190 aa)). Residue 223–229 (SGGVDSS) coordinates ATP.

As to quaternary structure, homodimer.

It catalyses the reaction XMP + L-glutamine + ATP + H2O = GMP + L-glutamate + AMP + diphosphate + 2 H(+). The protein operates within purine metabolism; GMP biosynthesis; GMP from XMP (L-Gln route): step 1/1. Functionally, catalyzes the synthesis of GMP from XMP. The polypeptide is GMP synthase [glutamine-hydrolyzing] (Geobacillus kaustophilus (strain HTA426)).